We begin with the raw amino-acid sequence, 57 residues long: Conotoxin reg3.17 (57 aa).

Residues 1–16 (TICLLLFPLTVVPLDG) form the signal peptide. Residues 17 to 44 (DQPAHQPAVRKHNIKSAVQLRQWDEEQQ) constitute a propeptide that is removed on maturation. 3 disulfides stabilise this stretch: cysteine 45-cysteine 57, cysteine 46-cysteine 53, and cysteine 50-cysteine 56.

Belongs to the conotoxin M superfamily. As to expression, expressed by the venom duct.

Its subcellular location is the secreted. The protein is Conotoxin reg3.17 of Conus regius (Crown cone).